Consider the following 103-residue polypeptide: Small ribosomal subunit protein bS6c (103 aa).

This sequence belongs to the bacterial ribosomal protein bS6 family.

It localises to the plastid. Its subcellular location is the chloroplast. Binds together with bS18 to 16S ribosomal RNA. This Cyanidium caldarium (Red alga) protein is Small ribosomal subunit protein bS6c (rps6).